The primary structure comprises 184 residues: Vacuolar protein sorting-associated protein 68 (184 aa).

The residue at position 1 (methionine 1) is an N-acetylmethionine. Position 8 is a phosphoserine (serine 8). A helical transmembrane segment spans residues 26 to 46 (GVYLSGALYALGFWIFLDAVL). N-linked (GlcNAc...) asparagine glycosylation occurs at asparagine 52. The next 3 helical transmembrane spans lie at 56–76 (VHVT…TLIV), 115–135 (LFFG…VLII), and 150–170 (MGVN…VLWI).

This sequence belongs to the UPF0220 family.

It is found in the vacuole membrane. It localises to the mitochondrion. In terms of biological role, involved in vacuolar protein sorting. In Saccharomyces cerevisiae (strain ATCC 204508 / S288c) (Baker's yeast), this protein is Vacuolar protein sorting-associated protein 68 (VPS68).